Here is a 107-residue protein sequence, read N- to C-terminus: Probable insulin-like peptide beta-type 3 (107 aa).

An N-terminal signal peptide occupies residues 1–19 (MKLSVVLALFIIFQLGAAS). The propeptide occupies 20-55 (LMRNWMFDFEKELEHDYDDSEIGFHNIHSLMARSRR). Disulfide bonds link Cys62–Cys90, Cys74–Cys103, Cys78–Cys104, and Cys89–Cys94.

This sequence belongs to the insulin family.

It localises to the secreted. In Caenorhabditis elegans, this protein is Probable insulin-like peptide beta-type 3 (ins-3).